Here is a 172-residue protein sequence, read N- to C-terminus: C-phycocyanin beta subunit (172 aa).

Asn72 carries the post-translational modification N4-methylasparagine. Residues Cys82 and Cys153 each contribute to the (2R,3E)-phycocyanobilin site.

It belongs to the phycobiliprotein family. As to quaternary structure, heterodimer of an alpha and a beta subunit, which further assembles into trimers and the trimers into hexamers. In terms of processing, contains two covalently linked bilin chromophores.

The protein resides in the cellular thylakoid membrane. Functionally, light-harvesting photosynthetic bile pigment-protein from the phycobiliprotein complex (phycobilisome, PBS). Phycocyanin is the major phycobiliprotein in the PBS rod. This is C-phycocyanin beta subunit (cpcB) from Synechocystis sp. (strain PCC 6701).